Here is a 300-residue protein sequence, read N- to C-terminus: N-acetylmuramic acid 6-phosphate etherase 2 (300 aa).

The 164-residue stretch at 57 to 220 (ITAAFANGGR…TTGAMIRSGK (164 aa)) folds into the SIS domain. The Proton donor role is filled by glutamate 85. Glutamate 116 is an active-site residue.

It belongs to the GCKR-like family. MurNAc-6-P etherase subfamily. Homodimer.

It catalyses the reaction N-acetyl-D-muramate 6-phosphate + H2O = N-acetyl-D-glucosamine 6-phosphate + (R)-lactate. The protein operates within amino-sugar metabolism; 1,6-anhydro-N-acetylmuramate degradation. Its pathway is amino-sugar metabolism; N-acetylmuramate degradation. It functions in the pathway cell wall biogenesis; peptidoglycan recycling. Its function is as follows. Specifically catalyzes the cleavage of the D-lactyl ether substituent of MurNAc 6-phosphate, producing GlcNAc 6-phosphate and D-lactate. Together with AnmK, is also required for the utilization of anhydro-N-acetylmuramic acid (anhMurNAc) either imported from the medium or derived from its own cell wall murein, and thus plays a role in cell wall recycling. The sequence is that of N-acetylmuramic acid 6-phosphate etherase 2 from Vibrio parahaemolyticus serotype O3:K6 (strain RIMD 2210633).